A 197-amino-acid chain; its full sequence is uncharacterized protein (197 aa).

Positions Met1–Ser10 are enriched in polar residues. 2 disordered regions span residues Met1–Ser46 and Leu54–Arg73. The segment covering Leu18–Glu37 has biased composition (basic and acidic residues). Residues Asp58–Pro69 show a composition bias toward polar residues. 2 helical membrane passes run Asn83–Trp105 and Ala120–Leu142.

Belongs to the WTF family.

It localises to the endoplasmic reticulum membrane. This is an uncharacterized protein from Schizosaccharomyces pombe (strain 972 / ATCC 24843) (Fission yeast).